The chain runs to 121 residues: Large ribosomal subunit protein uL18 (121 aa).

Belongs to the universal ribosomal protein uL18 family. Part of the 50S ribosomal subunit; part of the 5S rRNA/L5/L18/L25 subcomplex. Contacts the 5S and 23S rRNAs.

In terms of biological role, this is one of the proteins that bind and probably mediate the attachment of the 5S RNA into the large ribosomal subunit, where it forms part of the central protuberance. This Streptococcus thermophilus (strain CNRZ 1066) protein is Large ribosomal subunit protein uL18.